We begin with the raw amino-acid sequence, 835 residues long: Involucrin (835 aa).

Residues 1–15 (MSQQHTLPVTLSPAL) are compositionally biased toward polar residues. Disordered regions lie at residues 1-133 (MSQQ…LDQR), 150-206 (EQLL…LEVP), 221-285 (GQLK…QLKH), 321-342 (GQLK…QEGQ), 381-428 (GQLK…VPEE), 446-486 (LDQQ…LEVP), 501-548 (GQLK…VPEE), and 566-809 (LDQQ…QPAL). The span at 76–91 (EQQQQEPQEQELQQQH) shows a compositional bias: low complexity. 2 stretches are compositionally biased toward basic and acidic residues: residues 92-115 (WEQH…KAQR) and 159-168 (QEQHLKHLEQ). Positions 169-181 (QEGQLELPEQQEG) are enriched in low complexity. Basic and acidic residues-rich tracts occupy residues 182–198 (QLKH…HLEQ) and 222–268 (QLKH…HLDQ). 3 stretches are compositionally biased toward low complexity: residues 269–281 (QEGQ…QQEG), 329–341 (QEGQ…QQEG), and 389–401 (QEGQ…QQEG). 2 stretches are compositionally biased toward basic and acidic residues: residues 402-421 (QLKH…HQEG) and 446-464 (LDQQ…KQLE). The segment covering 509-521 (QEGQLELPEQQEG) has biased composition (low complexity). 3 stretches are compositionally biased toward basic and acidic residues: residues 522–541 (QLKH…HQEG), 566–584 (LDQQ…KQLE), and 594–620 (KHLE…EHQE). The segment covering 655–668 (HLVQQEGQLEQQEG) has biased composition (low complexity). Residues 669–685 (QVEHLEEQVGQLKHLEE) show a composition bias toward basic and acidic residues. The span at 693-710 (LEQQQGQLEVPEQQVGQP) shows a compositional bias: low complexity. Basic and acidic residues-rich tracts occupy residues 711-721 (KHLEQEEKQLE), 729-738 (QLKHLEKQEA), and 751-775 (KHLE…HLEQ). The span at 776-789 (QEGQLKNLEQQKGQ) shows a compositional bias: polar residues.

This sequence belongs to the involucrin family. Directly or indirectly cross-linked to cornifelin (CNFN). Substrate of transglutaminase. Specific glutamines or lysines are cross-linked to keratins, desmoplakin and to inter involucrin molecules. In terms of tissue distribution, keratinocytes of epidermis and other stratified squamous epithelia.

The protein resides in the cytoplasm. Part of the insoluble cornified cell envelope (CE) of stratified squamous epithelia. The protein is Involucrin (IVL) of Pongo pygmaeus (Bornean orangutan).